The primary structure comprises 227 residues: H-2 class II histocompatibility antigen, A-U alpha chain (227 aa).

The segment at 1 to 82 (DHVGSYGIVV…KRSNSTPATN (82 aa)) is alpha-1. Topologically, residues 1–189 (DHVGSYGIVV…IPAPMSELTE (189 aa)) are extracellular. Positions 83–176 (EAPQATVFPK…GLEEPVLKHW (94 aa)) are alpha-2. Residues 85 to 177 (PQATVFPKSP…LEEPVLKHWE (93 aa)) enclose the Ig-like C1-type domain. Residues C105 and C161 are joined by a disulfide bond. A glycan (N-linked (GlcNAc...) asparagine) is linked at N116. Residues 177–189 (EPEIPAPMSELTE) are connecting peptide. A helical transmembrane segment spans residues 190–215 (TVVCALGLSVGLVGIVVGTIFIIQGL). Topologically, residues 216–227 (RSGGTSRHPGPL) are cytoplasmic.

It belongs to the MHC class II family.

The protein localises to the membrane. The polypeptide is H-2 class II histocompatibility antigen, A-U alpha chain (H2-Aa) (Mus musculus (Mouse)).